The chain runs to 160 residues: MSLATLDTSQHPNLPSASATLFKAKAAKKFSFEQIAQHIGRNEVATAAIFYGQAKASPEDITNLASLLEIPQEVLEDQLSGFPDRGKSVEMPPKEPLIYRLYEIVQNYGYAYKAVLNEKFGDGIMSAISFSTKVEKETDADGNNWAVITLRGKWLPFSRF.

Active-site residues include Arg-100, Glu-103, and Ser-126.

It belongs to the cyanase family.

The catalysed reaction is cyanate + hydrogencarbonate + 3 H(+) = NH4(+) + 2 CO2. In terms of biological role, catalyzes the reaction of cyanate with bicarbonate to produce ammonia and carbon dioxide. In Aspergillus flavus (strain ATCC 200026 / FGSC A1120 / IAM 13836 / NRRL 3357 / JCM 12722 / SRRC 167), this protein is Cyanate hydratase.